The primary structure comprises 207 residues: FMN-dependent NADH:quinone oxidoreductase (207 aa).

Residues Ser-10, Ser-16 to Ser-18, Met-96 to Leu-99, and Ser-141 to Gly-144 each bind FMN.

It belongs to the azoreductase type 1 family. Homodimer. Requires FMN as cofactor.

It catalyses the reaction 2 a quinone + NADH + H(+) = 2 a 1,4-benzosemiquinone + NAD(+). It carries out the reaction N,N-dimethyl-1,4-phenylenediamine + anthranilate + 2 NAD(+) = 2-(4-dimethylaminophenyl)diazenylbenzoate + 2 NADH + 2 H(+). Quinone reductase that provides resistance to thiol-specific stress caused by electrophilic quinones. Its function is as follows. Also exhibits azoreductase activity. Catalyzes the reductive cleavage of the azo bond in aromatic azo compounds to the corresponding amines. The polypeptide is FMN-dependent NADH:quinone oxidoreductase (Nostoc sp. (strain PCC 7120 / SAG 25.82 / UTEX 2576)).